We begin with the raw amino-acid sequence, 188 residues long: Probable manganese efflux pump MntP (188 aa).

5 helical membrane-spanning segments follow: residues 3–23 (ITAT…ASIG), 66–86 (LEWN…RMII), 106–128 (WLLV…GLAF), 143–163 (ATLI…PILG), and 168–188 (ILGG…HFHG).

The protein belongs to the MntP (TC 9.B.29) family.

It is found in the cell inner membrane. In terms of biological role, probably functions as a manganese efflux pump. The protein is Probable manganese efflux pump MntP of Escherichia fergusonii (strain ATCC 35469 / DSM 13698 / CCUG 18766 / IAM 14443 / JCM 21226 / LMG 7866 / NBRC 102419 / NCTC 12128 / CDC 0568-73).